A 253-amino-acid polypeptide reads, in one-letter code: uncharacterized protein (253 aa).

6 consecutive transmembrane segments (helical) span residues 17–37, 46–66, 93–113, 139–159, 172–192, and 222–242; these read MWLL…HIIA, IFGF…VFVF, LAAS…YGIW, MYGL…WTVF, AMVL…SPLV, and IHLS…LLIM.

The protein resides in the cell membrane. This is an uncharacterized protein from Bacillus subtilis (strain 168).